A 279-amino-acid chain; its full sequence is Phosphatidylglycerol--prolipoprotein diacylglyceryl transferase (279 aa).

7 helical membrane passes run 14 to 34, 62 to 82, 106 to 126, 136 to 156, 190 to 210, 218 to 238, and 252 to 272; these read IAFS…ACAI, YFLW…ILIY, FVGI…IASY, LLIY…FGRI, PSQL…VMWA, GLLI…AEFY, and LSMG…ILLY. R155 is a binding site for a 1,2-diacyl-sn-glycero-3-phospho-(1'-sn-glycerol).

It belongs to the Lgt family.

It localises to the cell inner membrane. The enzyme catalyses L-cysteinyl-[prolipoprotein] + a 1,2-diacyl-sn-glycero-3-phospho-(1'-sn-glycerol) = an S-1,2-diacyl-sn-glyceryl-L-cysteinyl-[prolipoprotein] + sn-glycerol 1-phosphate + H(+). Its pathway is protein modification; lipoprotein biosynthesis (diacylglyceryl transfer). Its function is as follows. Catalyzes the transfer of the diacylglyceryl group from phosphatidylglycerol to the sulfhydryl group of the N-terminal cysteine of a prolipoprotein, the first step in the formation of mature lipoproteins. The polypeptide is Phosphatidylglycerol--prolipoprotein diacylglyceryl transferase (Helicobacter pylori (strain HPAG1)).